The sequence spans 291 residues: uncharacterized protein (291 aa).

10 helical membrane-spanning segments follow: residues 5–23 (ILLS…YFST), 33–52 (IFGF…VFLF), 69–91 (PLLI…LFLW), 101–120 (VSFG…RLVF), 127–144 (VKFL…SNIL), 148–165 (GLSW…TYFA), 172–194 (INDL…YFAW), 209–228 (LLLL…TYIV), 235–257 (INVL…FLIG), and 262–284 (SETI…EGLV).

This sequence belongs to the EamA transporter family.

It localises to the cell membrane. This is an uncharacterized protein from Pasteurella multocida (strain Pm70).